Consider the following 166-residue polypeptide: Mitochondrial inner membrane protease subunit 1 (166 aa).

Active-site residues include Ser-40 and Lys-83.

The protein belongs to the peptidase S26 family. IMP1 subfamily. As to quaternary structure, heterodimer of 2 subunits, IMMPL1 and IMMPL2.

The protein resides in the mitochondrion inner membrane. Catalyzes the removal of transit peptides required for the targeting of proteins from the mitochondrial matrix, across the inner membrane, into the inter-membrane space. Known to process the nuclear encoded protein DIABLO. The polypeptide is Mitochondrial inner membrane protease subunit 1 (Immp1l) (Mus musculus (Mouse)).